The primary structure comprises 92 residues: MKITDVRVRKLTEEGKMKCIVSITFDNLFVVHDIKVIEGHNGLFIAMPSRKVGEGNFRDIAHPINAEMRQVLEDAVLQAYHEALVQWEVAAE.

Belongs to the SpoVG family.

Could be involved in septation. In Clostridioides difficile (strain 630) (Peptoclostridium difficile), this protein is Putative septation protein SpoVG.